We begin with the raw amino-acid sequence, 220 residues long: Metalloproteinase inhibitor 2 (220 aa).

An N-terminal signal peptide occupies residues Met-1–Ala-26. Cys-27 is a Zn(2+) binding site. Involved in metalloproteinase-binding stretches follow at residues Cys-27 to Ser-30 and Ser-95 to Ala-96. Cystine bridges form between Cys-27/Cys-98, Cys-29/Cys-127, Cys-39/Cys-152, Cys-154/Cys-201, Cys-159/Cys-164, and Cys-172/Cys-193. The NTR domain occupies Cys-27–Cys-152.

It belongs to the protease inhibitor I35 (TIMP) family. In terms of assembly, interacts (via the C-terminal) with MMP2 (via the C-terminal PEX domain); the interaction inhibits the MMP2 activity. In terms of processing, the activity of TIMP2 is dependent on the presence of disulfide bonds.

It localises to the secreted. In terms of biological role, complexes with metalloproteinases (such as collagenases) and irreversibly inactivates them by binding to their catalytic zinc cofactor. Known to act on MMP-1, MMP-2, MMP-3, MMP-7, MMP-8, MMP-9, MMP-10, MMP-13, MMP-14, MMP-15, MMP-16 and MMP-19. This Homo sapiens (Human) protein is Metalloproteinase inhibitor 2 (TIMP2).